Consider the following 798-residue polypeptide: Vacuolar protein sorting-associated protein 53 homolog (798 aa).

This sequence belongs to the VPS53 family. Component of the Golgi-associated retrograde protein (GARP) complex, also called VFT (VPS fifty-three) complex, composed of vps-51, vps-52, vps-53 and vps-54. Within the complex interacts with vps-51, vps-52 and vps-54. Ubiquitously expressed, with particularly strong expression in neuronal cells. Specifically expressed in head and tail neurons and in the pharynx and ventral cord motor neurons.

The protein resides in the golgi apparatus. The protein localises to the trans-Golgi network membrane. It is found in the endosome membrane. Its subcellular location is the perikaryon. It localises to the cytoplasm. The protein resides in the perinuclear region. Acts as a component of the GARP complex that is involved in retrograde transport from early and late endosomes to the trans-Golgi network (TGN). The GARP complex facilitates tethering as well as SNARE complex assembly at the Golgi. Plays a role in the trafficking of cargo to dense-core vesicles, probably through association with the EARP-interacting protein eipr-1. Important for neuronal function. The polypeptide is Vacuolar protein sorting-associated protein 53 homolog (Caenorhabditis elegans).